A 130-amino-acid polypeptide reads, in one-letter code: Albumin-1 E (130 aa).

Positions 1-26 (MASVKLASLIVLFATLGMFLTKNVGA) are cleaved as a signal peptide. 3 disulfides stabilise this stretch: Cys29–Cys46, Cys33–Cys48, and Cys41–Cys58. 2 propeptides span residues 64 to 69 (VFLKGN) and 123 to 130 (LLKSVSTA).

The C-terminal glycine may be removed from PA1b.

Its function is as follows. PA1b binds to basic 7S globulin (BG) and stimulates its phosphorylation activity. Involved in the signal transduction system to regulate the growth and differentiation as a hormone peptide. Toxic to various insects through binding to a high affinity binding site in the insect gut. The chain is Albumin-1 E from Pisum sativum (Garden pea).